A 283-amino-acid polypeptide reads, in one-letter code: MQTDSLSPSPNPVSPVPLNNPTSAPRYGTVIPNRIFVGGIDFKTNESDLRKFFSQYGSVKEVKIVNDRAGVSKGYGFVTFETQEDAQKILQEAEKLNYKDKKLNIGPAIRKQQVGIPRSSIMPAAGTMYLTTSTGYPYTYHNGVAYFHTPEVTSVPPPWPSRSVCSSPVMVAQPIYQQPAYHYQATAQYLPGQWQWSVPQPPASSAPFLYLQPSEVIYQPVEIAQDGGCVPPPLSLMETSVPEPYSDHGVQATYHQVYAPSAISMPAPVMQPEPIKTVWSIHY.

The tract at residues 1-25 (MQTDSLSPSPNPVSPVPLNNPTSAP) is disordered. The 78-residue stretch at 33 to 110 (NRIFVGGIDF…KKLNIGPAIR (78 aa)) folds into the RRM domain. The region spanning 160–184 (PSRSVCSSPVMVAQPIYQQPAYHYQ) is the DAZ domain.

It belongs to the RRM DAZ family. Interacts with DAZ1 and DAZL.

The protein resides in the cytoplasm. Functionally, probable RNA-binding protein, which may be required during spermatogenesis. May act by binding to the 3'-UTR of mRNAs and regulating their translation. The polypeptide is Protein boule-like (BOLL) (Macaca fascicularis (Crab-eating macaque)).